Here is a 124-residue protein sequence, read N- to C-terminus: Large ribosomal subunit protein uL18 (124 aa).

Belongs to the universal ribosomal protein uL18 family. Part of the 50S ribosomal subunit; part of the 5S rRNA/L5/L18/L25 subcomplex. Contacts the 5S and 23S rRNAs.

Functionally, this is one of the proteins that bind and probably mediate the attachment of the 5S RNA into the large ribosomal subunit, where it forms part of the central protuberance. The protein is Large ribosomal subunit protein uL18 of Caldicellulosiruptor saccharolyticus (strain ATCC 43494 / DSM 8903 / Tp8T 6331).